A 327-amino-acid polypeptide reads, in one-letter code: Probable serine/threonine-protein kinase WNK5 (327 aa).

A disordered region spans residues 1 to 48 (MPPNPTPPRRATTTTTRATSGVRRGEEEQGGMAVSASAGEEEEAFEEV). A compositionally biased stretch (low complexity) spans 9-19 (RRATTTTTRAT). A compositionally biased stretch (acidic residues) spans 39 to 48 (GEEEEAFEEV). One can recognise a Protein kinase domain in the interval 55–314 (GRYADVLGLG…AAELLRDPFF (260 aa)). 136-139 (TEVC) lines the ATP pocket. The active-site Proton acceptor is Asp-203.

It belongs to the protein kinase superfamily. Ser/Thr protein kinase family. WNK subfamily.

It catalyses the reaction L-seryl-[protein] + ATP = O-phospho-L-seryl-[protein] + ADP + H(+). The catalysed reaction is L-threonyl-[protein] + ATP = O-phospho-L-threonyl-[protein] + ADP + H(+). This is Probable serine/threonine-protein kinase WNK5 (WNK5) from Oryza sativa subsp. japonica (Rice).